The primary structure comprises 92 residues: Acylphosphatase (92 aa).

A disulfide bridge connects residues Cys5 and Cys49. The Acylphosphatase-like domain maps to 5 to 92 (CIIAWIYGRV…SGELTDFRIR (88 aa)). Residues Arg20 and Asn38 contribute to the active site.

The protein belongs to the acylphosphatase family.

The enzyme catalyses an acyl phosphate + H2O = a carboxylate + phosphate + H(+). The chain is Acylphosphatase from Shigella boydii serotype 4 (strain Sb227).